The following is a 109-amino-acid chain: Nucleoid-associated protein BCB4264_A0025 (109 aa).

Belongs to the YbaB/EbfC family. In terms of assembly, homodimer.

It localises to the cytoplasm. The protein localises to the nucleoid. Functionally, binds to DNA and alters its conformation. May be involved in regulation of gene expression, nucleoid organization and DNA protection. The sequence is that of Nucleoid-associated protein BCB4264_A0025 from Bacillus cereus (strain B4264).